Reading from the N-terminus, the 277-residue chain is 3-methyl-2-oxobutanoate hydroxymethyltransferase (277 aa).

Mg(2+) contacts are provided by Asp-54 and Asp-93. 3-methyl-2-oxobutanoate-binding positions include 54 to 55 (DS), Asp-93, and Lys-122. Residue Glu-124 coordinates Mg(2+). Glu-191 serves as the catalytic Proton acceptor.

The protein belongs to the PanB family. Homodecamer; pentamer of dimers. Requires Mg(2+) as cofactor.

It localises to the cytoplasm. The enzyme catalyses 3-methyl-2-oxobutanoate + (6R)-5,10-methylene-5,6,7,8-tetrahydrofolate + H2O = 2-dehydropantoate + (6S)-5,6,7,8-tetrahydrofolate. It functions in the pathway cofactor biosynthesis; (R)-pantothenate biosynthesis; (R)-pantoate from 3-methyl-2-oxobutanoate: step 1/2. In terms of biological role, catalyzes the reversible reaction in which hydroxymethyl group from 5,10-methylenetetrahydrofolate is transferred onto alpha-ketoisovalerate to form ketopantoate. The protein is 3-methyl-2-oxobutanoate hydroxymethyltransferase of Alkalilimnicola ehrlichii (strain ATCC BAA-1101 / DSM 17681 / MLHE-1).